The chain runs to 735 residues: ATP-dependent DNA helicase Hel308 (735 aa).

Residues Gln32 and 50-57 (APTGSGKT) contribute to the ATP site. The Helicase ATP-binding domain occupies 37-201 (QAGVEKGENL…WIGGKIVESS (165 aa)). The DEAH box signature appears at 146-149 (DEIH). In terms of domain architecture, Helicase C-terminal spans 235-431 (DLDLAAEAIE…GLRGLRHFIL (197 aa)).

The protein belongs to the helicase family. Hel308 subfamily. As to quaternary structure, monomer.

The enzyme catalyses Couples ATP hydrolysis with the unwinding of duplex DNA by translocating in the 3'-5' direction.. The catalysed reaction is ATP + H2O = ADP + phosphate + H(+). In terms of biological role, DNA-dependent ATPase and 3'-5' DNA helicase that may be involved in repair of stalled replication forks. The protein is ATP-dependent DNA helicase Hel308 of Aeropyrum pernix (strain ATCC 700893 / DSM 11879 / JCM 9820 / NBRC 100138 / K1).